A 413-amino-acid chain; its full sequence is MTATSLWELAERARKRLSEIAKGNRDRALLAMADLLEARWEEVLRANREDLEEAERTGLPKAKLDRLALKEKDLKTLTEGLRQIARLPDPLGRIEGLAKRPNGLRVGRMRVPLGLIGFIYEARPGATVEAVSVALKAGNAMLLRGGKEAFRSNRALVALWHEALEEAGLPEEAVTLVPTTDREAVLEMCRLELLDLLIPRGGEELIRLVQQEARVPVLAHAKGVNHLYVDEKADLSMALRLALNGKTQRPAVCNALEAVLVHEKVAEAFLPRLEKAMREKGVELRACPRALPLLKEAVPAREDEWDREYLDLVLRVKVVSGLEEALAHIARYGSRHTEAICTEDPKAAWRFLEEVDASLVLWNASTRFNDGFELGLGAEIGISTSKLHAYGPMGPLELTTLKWVALGEGQERT.

The protein belongs to the gamma-glutamyl phosphate reductase family.

It localises to the cytoplasm. The enzyme catalyses L-glutamate 5-semialdehyde + phosphate + NADP(+) = L-glutamyl 5-phosphate + NADPH + H(+). The protein operates within amino-acid biosynthesis; L-proline biosynthesis; L-glutamate 5-semialdehyde from L-glutamate: step 2/2. Functionally, catalyzes the NADPH-dependent reduction of L-glutamate 5-phosphate into L-glutamate 5-semialdehyde and phosphate. The product spontaneously undergoes cyclization to form 1-pyrroline-5-carboxylate. In Thermus thermophilus (strain ATCC BAA-163 / DSM 7039 / HB27), this protein is Gamma-glutamyl phosphate reductase.